The following is a 389-amino-acid chain: Nicotinate phosphoribosyltransferase (389 aa).

Histidine 216 is subject to Phosphohistidine; by autocatalysis.

The protein belongs to the NAPRTase family. Transiently phosphorylated on a His residue during the reaction cycle. Phosphorylation strongly increases the affinity for substrates and increases the rate of nicotinate D-ribonucleotide production. Dephosphorylation regenerates the low-affinity form of the enzyme, leading to product release.

The catalysed reaction is nicotinate + 5-phospho-alpha-D-ribose 1-diphosphate + ATP + H2O = nicotinate beta-D-ribonucleotide + ADP + phosphate + diphosphate. It participates in cofactor biosynthesis; NAD(+) biosynthesis; nicotinate D-ribonucleotide from nicotinate: step 1/1. Its function is as follows. Catalyzes the synthesis of beta-nicotinate D-ribonucleotide from nicotinate and 5-phospho-D-ribose 1-phosphate at the expense of ATP. The chain is Nicotinate phosphoribosyltransferase from Ralstonia nicotianae (strain ATCC BAA-1114 / GMI1000) (Ralstonia solanacearum).